The following is a 496-amino-acid chain: Iroquois-class homeodomain protein irx-4 (496 aa).

Positions 141-203 (GSTRRKNATR…NARRRLKKEN (63 aa)) form a DNA-binding region, homeobox; TALE-type. A disordered region spans residues 203–236 (NKMTWPPRNKCSDEKRPYDEEEEEEEEEDSQKAT). Acidic residues predominate over residues 221–231 (DEEEEEEEEED).

The protein belongs to the TALE/IRO homeobox family. In terms of tissue distribution, expressed in the neural plate in overlapping patterns with other irx members, which all share an anterior border of expression. Broadly expressed in the tailbud rhombencephalon (hindbrain). Outside the nervous system and at tailbud stages, expressed in the developing otic vesicle, branchial arches and prospective heart region.

It is found in the nucleus. Acts partially redundantly with other irx members in neural patterning. Required for formation of the posterior forebrain, midbrain, hindbrain, and to a lesser extent, spinal cord. Patterns the neuroectoderm in both the anterior/posterior and dorsal/ventral axes. Does not appear to play a role in pronephros kidney development. The polypeptide is Iroquois-class homeodomain protein irx-4 (Xenopus tropicalis (Western clawed frog)).